We begin with the raw amino-acid sequence, 336 residues long: Foldase protein PrsA (336 aa).

The signal sequence occupies residues 1–22 (MKSAKKLLSVLCLGIFILTFTA). A lipid anchor (N-palmitoyl cysteine) is attached at cysteine 23. Residue cysteine 23 is the site of S-diacylglycerol cysteine attachment. Positions 194–286 (PNTMNVSHIL…FGYHIIKINS (93 aa)) constitute a PpiC domain.

It belongs to the PrsA family.

It localises to the cell membrane. The enzyme catalyses [protein]-peptidylproline (omega=180) = [protein]-peptidylproline (omega=0). Its function is as follows. Plays a major role in protein secretion by helping the post-translocational extracellular folding of several secreted proteins. In Clostridium botulinum (strain Okra / Type B1), this protein is Foldase protein PrsA.